We begin with the raw amino-acid sequence, 20 residues long: Toxin CpTx-4a (20 aa).

It belongs to the spider toxin CSTX family. Expressed by the venom gland.

It localises to the secreted. Functionally, spider venom toxin that exhibits cytolytic activity by forming an alpha-helix across the membrane. Lethal to insect larvae. In Cheiracanthium punctorium (Yellow sac spider), this protein is Toxin CpTx-4a.